A 295-amino-acid chain; its full sequence is Protease HtpX (295 aa).

The next 2 helical transmembrane spans lie at 4 to 24 (ILLF…TLSL) and 41 to 61 (SSLL…SLFI). A Zn(2+)-binding site is contributed by histidine 147. Glutamate 148 is an active-site residue. Residue histidine 151 coordinates Zn(2+). Transmembrane regions (helical) follow at residues 158 to 178 (VTLA…ARII) and 199 to 219 (VATI…VMWF). Glutamate 224 contacts Zn(2+).

The protein belongs to the peptidase M48B family. Zn(2+) serves as cofactor.

It is found in the cell inner membrane. This chain is Protease HtpX, found in Pseudomonas putida (strain W619).